We begin with the raw amino-acid sequence, 296 residues long: 4-hydroxybenzoate octaprenyltransferase (296 aa).

8 consecutive transmembrane segments (helical) span residues 28-48 (IGTL…SDGI), 51-71 (LAVL…GCVI), 102-122 (LLLT…LNHL), 143-163 (FFPI…PMAF), 174-194 (AWIL…VYAM), 212-232 (FGRY…LLMA), 233-253 (VLGA…IVLL), and 274-294 (FLAN…HTFF).

The protein belongs to the UbiA prenyltransferase family. Mg(2+) serves as cofactor.

The protein resides in the cell inner membrane. The catalysed reaction is all-trans-octaprenyl diphosphate + 4-hydroxybenzoate = 4-hydroxy-3-(all-trans-octaprenyl)benzoate + diphosphate. The protein operates within cofactor biosynthesis; ubiquinone biosynthesis. In terms of biological role, catalyzes the prenylation of para-hydroxybenzoate (PHB) with an all-trans polyprenyl group. Mediates the second step in the final reaction sequence of ubiquinone-8 (UQ-8) biosynthesis, which is the condensation of the polyisoprenoid side chain with PHB, generating the first membrane-bound Q intermediate 3-octaprenyl-4-hydroxybenzoate. This is 4-hydroxybenzoate octaprenyltransferase from Neisseria meningitidis serogroup B (strain ATCC BAA-335 / MC58).